The sequence spans 339 residues: Probable G-protein coupled receptor 33 (339 aa).

At 1–30 (MDLINSSTHVINVSTSLTNSTGVPTPAPKT) the chain is on the extracellular side. 3 N-linked (GlcNAc...) asparagine glycosylation sites follow: N5, N12, and N19. A helical transmembrane segment spans residues 31 to 53 (IIAASLFMAFIIGVISNGLYLWM). Over 54–64 (LQFKMQRTVNT) the chain is Cytoplasmic. A helical transmembrane segment spans residues 65-86 (LLFFHLILSYFISTLILPFMAT). Topologically, residues 87–103 (SFLQDNHWVFGSVLCKA) are extracellular. An intrachain disulfide couples C101 to C179. The chain crosses the membrane as a helical span at residues 104-124 (FNSTLSVSMFASVFFLSAISV). The Cytoplasmic portion of the chain corresponds to 125–143 (ARYYLILHPVWSQQHRTPH). Residues 144 to 165 (WASRIALQIWISATILSIPYLV) traverse the membrane as a helical segment. At 166–209 (FRTTHDDHKGRIKCQNNYIVSTDWESKEHQTLGQWIHAACFVGR) the chain is on the extracellular side. Residues 210-230 (FLLGFLLPFLVIIFCYKRVAT) form a helical membrane-spanning segment. Residues 231 to 246 (KMKEKGLFKSSKPFKV) are Cytoplasmic-facing. The helical transmembrane segment at 247–268 (MVTAVISFFVCWMPYHVHSGLV) threads the bilayer. Residues 269-283 (LTKSQPLPLHLTLGL) are Extracellular-facing. A helical transmembrane segment spans residues 284–303 (AVVTISFNTVVSPVLYLFTG). Residues 304–339 (ENFKVFKKSILALFNSTFSDISSTERTQTLNSETEI) lie on the Cytoplasmic side of the membrane.

This sequence belongs to the G-protein coupled receptor 1 family. In terms of tissue distribution, expressed predominantly in lung, spleen and testis.

The protein localises to the cell membrane. Orphan receptor; could be a chemoattractant receptor. The protein is Probable G-protein coupled receptor 33 (Gpr33) of Mus musculus (Mouse).